Consider the following 196-residue polypeptide: Venom platylysin (196 aa).

It belongs to the redulysin-like family. In terms of tissue distribution, expressed by the venom gland.

It is found in the secreted. Its function is as follows. Probable insecticidal toxin that has been detected in a semi-pure insecticidal fraction. The sequence is that of Venom platylysin from Platymeris biguttatus (Two-spotted assassin bug).